The chain runs to 705 residues: Ribosomal RNA large subunit methyltransferase K/L (705 aa).

Positions 43–154 constitute a THUMP domain; sequence LLYQSLLWSR…RDTASVALDL (112 aa).

The protein belongs to the methyltransferase superfamily. RlmKL family.

Its subcellular location is the cytoplasm. It catalyses the reaction guanosine(2445) in 23S rRNA + S-adenosyl-L-methionine = N(2)-methylguanosine(2445) in 23S rRNA + S-adenosyl-L-homocysteine + H(+). The enzyme catalyses guanosine(2069) in 23S rRNA + S-adenosyl-L-methionine = N(2)-methylguanosine(2069) in 23S rRNA + S-adenosyl-L-homocysteine + H(+). Its function is as follows. Specifically methylates the guanine in position 2445 (m2G2445) and the guanine in position 2069 (m7G2069) of 23S rRNA. This is Ribosomal RNA large subunit methyltransferase K/L from Pectobacterium atrosepticum (strain SCRI 1043 / ATCC BAA-672) (Erwinia carotovora subsp. atroseptica).